The chain runs to 356 residues: Arginine kinase (356 aa).

In terms of domain architecture, Phosphagen kinase N-terminal spans 8-91 (EKLEAGFKKL…FDPIIEDYHG (84 aa)). 64–68 (GVGIY) contacts substrate. The 238-residue stretch at 119–356 (YVISTRVRCG…LELIKIEGSL (238 aa)) folds into the Phosphagen kinase C-terminal domain. Residues 122-126 (STRVR) and H185 each bind ATP. Substrate is bound at residue E225. Position 229 (R229) interacts with ATP. C271 is a substrate binding site. ATP-binding positions include 280-284 (RASVH) and 309-314 (RGSTGE). E314 is a substrate binding site.

The protein belongs to the ATP:guanido phosphotransferase family.

It carries out the reaction L-arginine + ATP = N(omega)-phospho-L-arginine + ADP + H(+). The chain is Arginine kinase (ARGK) from Schistocerca americana (American grasshopper).